The sequence spans 1003 residues: UPF0182 protein Mkms_1433 (1003 aa).

7 consecutive transmembrane segments (helical) span residues 18–38 (VLIGVALAAVVLLLIGPRFID), 63–83 (VVVFLVVSLLIGAIVFAGLAL), 114–134 (LFGFGVPAFIGILSGIVAQSY), 176–196 (FVATFLAFIANLLGHYLFGGI), 211–231 (IQLVTLVGILILLKAFAYWLD), 260–280 (KLILLAIAVICAVAVFSAIVL), and 288–308 (IGVVLLLLSSLVVGAGWPLVV). The segment covering 902–937 (ATGPAPANLPDGQPAAQPPNGQQPAAQTPGNQAGRA) has biased composition (low complexity). The disordered stretch occupies residues 902-979 (ATGPAPANLP…MSGLQDAQRS (78 aa)).

The protein belongs to the UPF0182 family.

It localises to the cell membrane. The sequence is that of UPF0182 protein Mkms_1433 from Mycobacterium sp. (strain KMS).